The following is a 194-amino-acid chain: Probable nicotinate-nucleotide adenylyltransferase (194 aa).

This sequence belongs to the NadD family.

It catalyses the reaction nicotinate beta-D-ribonucleotide + ATP + H(+) = deamido-NAD(+) + diphosphate. Its pathway is cofactor biosynthesis; NAD(+) biosynthesis; deamido-NAD(+) from nicotinate D-ribonucleotide: step 1/1. Functionally, catalyzes the reversible adenylation of nicotinate mononucleotide (NaMN) to nicotinic acid adenine dinucleotide (NaAD). The polypeptide is Probable nicotinate-nucleotide adenylyltransferase (Chlorobium luteolum (strain DSM 273 / BCRC 81028 / 2530) (Pelodictyon luteolum)).